The primary structure comprises 258 residues: Regulatory protein RecX (258 aa).

It belongs to the RecX family.

Its subcellular location is the cytoplasm. Functionally, modulates RecA activity. The protein is Regulatory protein RecX of Streptococcus equi subsp. equi (strain 4047).